We begin with the raw amino-acid sequence, 369 residues long: Maltose/maltodextrin import ATP-binding protein MalK (369 aa).

An ABC transporter domain is found at 4-234; that stretch reads VQLRNVTKAW…PADRFVAGFI (231 aa). 36–43 is a binding site for ATP; sequence GPSGCGKS.

The protein belongs to the ABC transporter superfamily. Maltooligosaccharide importer (TC 3.A.1.1.1) family. The complex is composed of two ATP-binding proteins (MalK), two transmembrane proteins (MalG and MalK) and a solute-binding protein (MalE).

Its subcellular location is the cell inner membrane. The catalysed reaction is D-maltose(out) + ATP + H2O = D-maltose(in) + ADP + phosphate + H(+). Functionally, part of the ABC transporter complex MalEFGK involved in maltose/maltodextrin import. Responsible for energy coupling to the transport system. In Salmonella choleraesuis (strain SC-B67), this protein is Maltose/maltodextrin import ATP-binding protein MalK.